The following is a 334-amino-acid chain: GTPase Obg (334 aa).

The Obg domain maps to 1-159 (MKFVDSASVR…REIGLELSVM (159 aa)). One can recognise an OBG-type G domain in the interval 160–332 (ADIGLLGIPN…LVAGLFKLVL (173 aa)). Residues 166–173 (GIPNAGKS), 191–195 (FTTLH), 212–215 (DIPG), 282–285 (NKID), and 313–315 (SAL) contribute to the GTP site. The Mg(2+) site is built by Ser173 and Thr193.

This sequence belongs to the TRAFAC class OBG-HflX-like GTPase superfamily. OBG GTPase family. Monomer. Requires Mg(2+) as cofactor.

The protein resides in the cytoplasm. Its function is as follows. An essential GTPase which binds GTP, GDP and possibly (p)ppGpp with moderate affinity, with high nucleotide exchange rates and a fairly low GTP hydrolysis rate. Plays a role in control of the cell cycle, stress response, ribosome biogenesis and in those bacteria that undergo differentiation, in morphogenesis control. The chain is GTPase Obg from Vesicomyosocius okutanii subsp. Calyptogena okutanii (strain HA).